The following is a 317-amino-acid chain: Anamorsin homolog 2 (317 aa).

The segment at 1-162 (MAKKVGVLLF…KPSWDSASVF (162 aa)) is N-terminal SAM-like domain. Residues 163-229 (QLRKGSSQKG…EDDLLTEEDL (67 aa)) are linker. 4 residues coordinate [2Fe-2S] cluster: Cys240, Cys247, Cys250, and Cys252. Positions 240-252 (CAPTKKACKNCTC) are fe-S binding site A. Positions 278, 281, 289, and 292 each coordinate [4Fe-4S] cluster. 2 consecutive short sequence motifs (cx2C motif) follow at residues 278 to 281 (CGSC) and 289 to 292 (CAGC). The interval 278 to 292 (CGSCGLGDAFRCAGC) is fe-S binding site B.

It belongs to the anamorsin family. As to quaternary structure, monomer. It depends on [2Fe-2S] cluster as a cofactor. [4Fe-4S] cluster is required as a cofactor.

The protein localises to the cytoplasm. Its subcellular location is the mitochondrion intermembrane space. Component of the cytosolic iron-sulfur (Fe-S) protein assembly (CIA) machinery. Required for the maturation of extramitochondrial Fe-S proteins. Part of an electron transfer chain functioning in an early step of cytosolic Fe-S biogenesis, facilitating the de novo assembly of a [4Fe-4S] cluster on the cytosolic Fe-S scaffold complex. Electrons are transferred from NADPH via a FAD- and FMN-containing diflavin oxidoreductase. Together with the diflavin oxidoreductase, also required for the assembly of the diferric tyrosyl radical cofactor of ribonucleotide reductase (RNR), probably by providing electrons for reduction during radical cofactor maturation in the catalytic small subunit. This is Anamorsin homolog 2 from Physcomitrium patens (Spreading-leaved earth moss).